The following is a 380-amino-acid chain: tRNA-specific 2-thiouridylase MnmA (380 aa).

ATP-binding positions include A26–S33 and L52. The Nucleophile role is filled by C120. Residues C120 and C217 are joined by a disulfide bond. An ATP-binding site is contributed by G144. The interaction with tRNA stretch occupies residues R166–Q168. The Cysteine persulfide intermediate role is filled by C217.

Belongs to the MnmA/TRMU family.

The protein localises to the cytoplasm. It catalyses the reaction S-sulfanyl-L-cysteinyl-[protein] + uridine(34) in tRNA + AH2 + ATP = 2-thiouridine(34) in tRNA + L-cysteinyl-[protein] + A + AMP + diphosphate + H(+). Its function is as follows. Catalyzes the 2-thiolation of uridine at the wobble position (U34) of tRNA, leading to the formation of s(2)U34. The sequence is that of tRNA-specific 2-thiouridylase MnmA from Jannaschia sp. (strain CCS1).